We begin with the raw amino-acid sequence, 273 residues long: MRLDNPIGIYLLLWPTLWALFLASEGFPDLKLLLIFVLGVVLMRSAGCVINDYADRYIDKLVERTKHRPITSGEIHHRSALKFFVLLIMLAFLLVLLTNWLTIQLAMIAVLLAILYPFTKRWTYFPQFVLGLAFAMSVLMAFSATLNEIPITAWYVFAATVIWTVIYDTMYAMADREEDLKIGIKSSAILFAKFDRLIIGILQIIFLLILIKISNVFNLTISYHITLLLVTLLMIYHQYLIKNNENYSYLHGFLHNNYIGMVIFIGIVLSVGL.

Transmembrane regions (helical) follow at residues Ile-7–Phe-27, Leu-30–Ile-50, Phe-83–Ile-103, Trp-122–Phe-142, Leu-146–Ile-166, Leu-197–Phe-217, Ile-221–Ile-241, and Phe-253–Leu-273.

The protein belongs to the UbiA prenyltransferase family. Requires Mg(2+) as cofactor.

It localises to the cell inner membrane. The enzyme catalyses all-trans-octaprenyl diphosphate + 4-hydroxybenzoate = 4-hydroxy-3-(all-trans-octaprenyl)benzoate + diphosphate. Its pathway is cofactor biosynthesis; ubiquinone biosynthesis. Catalyzes the prenylation of para-hydroxybenzoate (PHB) with an all-trans polyprenyl group. Mediates the second step in the final reaction sequence of ubiquinone-8 (UQ-8) biosynthesis, which is the condensation of the polyisoprenoid side chain with PHB, generating the first membrane-bound Q intermediate 3-octaprenyl-4-hydroxybenzoate. The sequence is that of 4-hydroxybenzoate octaprenyltransferase from Vesicomyosocius okutanii subsp. Calyptogena okutanii (strain HA).